The sequence spans 354 residues: Anthranilate phosphoribosyltransferase (354 aa).

5-phospho-alpha-D-ribose 1-diphosphate contacts are provided by residues glycine 94, 97 to 98 (GD), threonine 102, 104 to 107 (NIST), 122 to 130 (KHGNRAASS), and serine 134. Position 94 (glycine 94) interacts with anthranilate. Serine 106 is a binding site for Mg(2+). Asparagine 125 is a binding site for anthranilate. Arginine 180 contacts anthranilate. Residues aspartate 238 and glutamate 239 each coordinate Mg(2+).

The protein belongs to the anthranilate phosphoribosyltransferase family. Homodimer. Mg(2+) serves as cofactor.

The enzyme catalyses N-(5-phospho-beta-D-ribosyl)anthranilate + diphosphate = 5-phospho-alpha-D-ribose 1-diphosphate + anthranilate. Its pathway is amino-acid biosynthesis; L-tryptophan biosynthesis; L-tryptophan from chorismate: step 2/5. Catalyzes the transfer of the phosphoribosyl group of 5-phosphorylribose-1-pyrophosphate (PRPP) to anthranilate to yield N-(5'-phosphoribosyl)-anthranilate (PRA). The protein is Anthranilate phosphoribosyltransferase of Streptomyces avermitilis (strain ATCC 31267 / DSM 46492 / JCM 5070 / NBRC 14893 / NCIMB 12804 / NRRL 8165 / MA-4680).